Here is a 208-residue protein sequence, read N- to C-terminus: Large ribosomal subunit protein uL4 (208 aa).

The interval 45 to 89 is disordered; that stretch reads RQGTHAHKNRSAVSGGGKKPWRQKGTGRARQGSTRSPQWRGGGTV.

The protein belongs to the universal ribosomal protein uL4 family. In terms of assembly, part of the 50S ribosomal subunit.

In terms of biological role, one of the primary rRNA binding proteins, this protein initially binds near the 5'-end of the 23S rRNA. It is important during the early stages of 50S assembly. It makes multiple contacts with different domains of the 23S rRNA in the assembled 50S subunit and ribosome. Forms part of the polypeptide exit tunnel. The sequence is that of Large ribosomal subunit protein uL4 from Lactococcus lactis subsp. cremoris (strain MG1363).